The primary structure comprises 773 residues: 4'-phosphopantetheine phosphatase (773 aa).

The residue at position 2 (A2) is an N-acetylalanine. Residues 2-402 form a pantothenate kinase region; the sequence is AECGASGSGS…SPELGPAQRA (401 aa). S196 and S199 together coordinate acetyl-CoA. Position 320 is a 3'-nitrotyrosine (Y320). Residues S393 and S404 each carry the phosphoserine modification. The segment at 403-773 is 4'-phosphopantetheine phosphatase; sequence RSGTFDLLEM…VIFKYEVPAE (371 aa). T406 bears the Phosphothreonine mark. Mn(2+) is bound by residues D623, N624, and D659. Positions 724 to 728 match the Subfamily II EGMGR motif motif; the sequence is EGMGR.

It in the N-terminal section; belongs to the type II pantothenate kinase family. The protein in the C-terminal section; belongs to the damage-control phosphatase family. Phosphopantetheine phosphatase II subfamily. Homodimer. Interacts with PKM. It depends on Mn(2+) as a cofactor. Ni(2+) serves as cofactor. In terms of tissue distribution, widely expressed with high expression in the muscle. Expressed in the retina and lens epithelium, mainly in ganglion cell layer, outer plexiform layer and retinal pigment layer (at protein level).

It is found in the cytoplasm. The enzyme catalyses (R)-4'-phosphopantetheine + H2O = (R)-pantetheine + phosphate. It catalyses the reaction (R)-4'-phosphopantetheine sulfonate + H2O = (R)-pantetheine sulfonate + phosphate. The catalysed reaction is (R)-4'-phospho-S-sulfopantetheine + H2O = (R)-S-sulfopantetheine + phosphate. With respect to regulation, activity is strongly promoted by Co(2+), Ni(2+), Mg(2+) and Mn(2+). Activity is inhibited by EDTA. Phosphatase which shows a preference for 4'-phosphopantetheine and its oxidatively damaged forms (sulfonate or S-sulfonate), providing strong indirect evidence that the phosphatase activity pre-empts damage in the coenzyme A (CoA) pathway. Hydrolyzing excess 4'-phosphopantetheine could constitute a directed overflow mechanism to prevent its oxidation to the S-sulfonate, sulfonate, or other forms. Hydrolyzing 4'-phosphopantetheine sulfonate or S-sulfonate would forestall their conversion to inactive forms of CoA and acyl carrier protein. May play a role in the physiological regulation of CoA intracellular levels. The protein is 4'-phosphopantetheine phosphatase of Homo sapiens (Human).